The following is a 321-amino-acid chain: Auxin-responsive protein IAA8 (321 aa).

The EAR-like (transcriptional repression) signature appears at 54–58; sequence LRLGL. Positions 199 to 301 constitute a PB1 domain; the sequence is VLFVKVSMDG…TCQKLKIMKG (103 aa).

The protein belongs to the Aux/IAA family. Homodimers and heterodimers. Interacts with TPL. As to expression, highly expressed in the whole plant.

The protein localises to the nucleus. Its function is as follows. Aux/IAA proteins are short-lived transcriptional factors that function as repressors of early auxin response genes at low auxin concentrations. Repression is thought to result from the interaction with auxin response factors (ARFs), proteins that bind to the auxin-responsive promoter element (AuxRE). Formation of heterodimers with ARF proteins may alter their ability to modulate early auxin response genes expression. This Arabidopsis thaliana (Mouse-ear cress) protein is Auxin-responsive protein IAA8 (IAA8).